A 395-amino-acid polypeptide reads, in one-letter code: Probable FMNH2-dependent monooxygenase SfnC (395 aa).

Involved in the dimethyl sulfide degradation pathway. In Pseudomonas putida (Arthrobacter siderocapsulatus), this protein is Probable FMNH2-dependent monooxygenase SfnC.